We begin with the raw amino-acid sequence, 85 residues long: uncharacterized protein (85 aa).

A disordered region spans residues 44–85 (EAHPSEHNGTVPRSLSQEWAKILAEEAEENSEENNDESEEDN). The segment covering 50–60 (HNGTVPRSLSQ) has biased composition (polar residues). Positions 68 to 85 (EEAEENSEENNDESEEDN) are enriched in acidic residues.

This is an uncharacterized protein from Haloarcula hispanica (His1V).